The following is a 270-amino-acid chain: Putative phosphoenolpyruvate synthase regulatory protein (270 aa).

ADP is bound at residue 150–157 (GVSRCGKT).

The protein belongs to the pyruvate, phosphate/water dikinase regulatory protein family. PSRP subfamily.

It catalyses the reaction [pyruvate, water dikinase] + ADP = [pyruvate, water dikinase]-phosphate + AMP + H(+). The enzyme catalyses [pyruvate, water dikinase]-phosphate + phosphate + H(+) = [pyruvate, water dikinase] + diphosphate. Functionally, bifunctional serine/threonine kinase and phosphorylase involved in the regulation of the phosphoenolpyruvate synthase (PEPS) by catalyzing its phosphorylation/dephosphorylation. This chain is Putative phosphoenolpyruvate synthase regulatory protein, found in Shewanella sediminis (strain HAW-EB3).